The chain runs to 140 residues: Large ribosomal subunit protein uL11 (140 aa).

It belongs to the universal ribosomal protein uL11 family. In terms of assembly, part of the ribosomal stalk of the 50S ribosomal subunit. Interacts with L10 and the large rRNA to form the base of the stalk. L10 forms an elongated spine to which L12 dimers bind in a sequential fashion forming a multimeric L10(L12)X complex. Post-translationally, one or more lysine residues are methylated.

Functionally, forms part of the ribosomal stalk which helps the ribosome interact with GTP-bound translation factors. The polypeptide is Large ribosomal subunit protein uL11 (Heliobacterium modesticaldum (strain ATCC 51547 / Ice1)).